A 76-amino-acid chain; its full sequence is Serine palmitoyltransferase small subunit B (76 aa).

At 1-11 the chain is on the cytoplasmic side; it reads MDFKRVKEYFA. A helical membrane pass occupies residues 12-29; sequence WLYYQYQIITCCAVMEPW. At 30 to 36 the chain is on the lumenal side; that stretch reads EQSMLNT. A helical transmembrane segment spans residues 37 to 57; sequence IILTIVAMVVYTAYVFIPIHI. Topologically, residues 58-76 are cytoplasmic; it reads RLAWEFFSKICGYDSSISN.

The protein belongs to the SPTSS family. SPTSSB subfamily. In terms of assembly, component of the serine palmitoyltransferase (SPT) complex, which is composed of SPTLC1, SPTLC2 or SPTLC3 and SPTSSA or SPTSSB. The heterodimer consisting of SPTLC1 and SPTLC2/SPTLC3 forms the catalytic core of the enzyme, while SPTSSA or SPTSSB subunits determine substrate specificity. SPT also interacts with ORMDL proteins, especially ORMDL3, which negatively regulate SPT activity in the presence of ceramides. Expression is strong in hypogonadal (hpg) mouse prostate, weak in mature castrated mouse prostate and absent in normal intact or androgen-replaced hpg mouse prostates.

It localises to the endoplasmic reticulum membrane. The protein operates within lipid metabolism; sphingolipid metabolism. Functionally, component of the serine palmitoyltransferase multisubunit enzyme (SPT) that catalyzes the initial and rate-limiting step in sphingolipid biosynthesis by condensing L-serine and activated acyl-CoA (most commonly palmitoyl-CoA) to form long-chain bases. The SPT complex is composed of SPTLC1, SPTLC2 or SPTLC3 and SPTSSA or SPTSSB. Within this complex, the heterodimer consisting of SPTLC1 and SPTLC2/SPTLC3 forms the catalytic core. Within the SPT complex, SPTSSB stimulates the catalytic activity and plays a role in substrate specificity. SPT complexes with this subunit showing a preference for longer acyl-CoAs. The SPTLC1-SPTLC2-SPTSSB complex shows a strong preference for C18-CoA substrate, while the SPTLC1-SPTLC3-SPTSSB isozyme displays an ability to use a broader range of acyl-CoAs, without apparent preference. The polypeptide is Serine palmitoyltransferase small subunit B (Sptssb) (Mus musculus (Mouse)).